The following is a 622-amino-acid chain: 1-deoxy-D-xylulose-5-phosphate synthase (622 aa).

Thiamine diphosphate is bound by residues histidine 74 and 115-117 (GHS). Position 146 (aspartate 146) interacts with Mg(2+). Residues 147–148 (GA), asparagine 177, phenylalanine 285, and glutamate 366 contribute to the thiamine diphosphate site. Mg(2+) is bound at residue asparagine 177.

This sequence belongs to the transketolase family. DXPS subfamily. Homodimer. Mg(2+) serves as cofactor. The cofactor is thiamine diphosphate.

The enzyme catalyses D-glyceraldehyde 3-phosphate + pyruvate + H(+) = 1-deoxy-D-xylulose 5-phosphate + CO2. It functions in the pathway metabolic intermediate biosynthesis; 1-deoxy-D-xylulose 5-phosphate biosynthesis; 1-deoxy-D-xylulose 5-phosphate from D-glyceraldehyde 3-phosphate and pyruvate: step 1/1. Catalyzes the acyloin condensation reaction between C atoms 2 and 3 of pyruvate and glyceraldehyde 3-phosphate to yield 1-deoxy-D-xylulose-5-phosphate (DXP). In Magnetococcus marinus (strain ATCC BAA-1437 / JCM 17883 / MC-1), this protein is 1-deoxy-D-xylulose-5-phosphate synthase.